Reading from the N-terminus, the 398-residue chain is Na(+)/H(+) antiporter NhaA (398 aa).

12 consecutive transmembrane segments (helical) span residues 9–29 (MITHPAAGGVLLFAAALAAIV), 57–77 (LSLLVLVNDGLMAVFFLAVGL), 95–115 (AFPAIAALGGMVAPAVIYSLM), 124–144 (AGWAIPAATDIAFAVGVLALL), 154–174 (VFMLALAIIDDLGAIVIIALF), 177–197 (TALEPLALAAAGAVIGIMALM), 204–224 (FLSLYLLLGAVLWGCILLSGI), 226–246 (ATLAGVVVGGLIPLTLPSTEV), 255–275 (WLQPWVVYLILPLFAFANAGI), 288–308 (FLPLGIAAGLVVGKPLGIVLF), 329–349 (IAAAAMLCGIGFTMSIFIANL), and 359–379 (IVLAKVGILSGSVIAALLGYL).

It belongs to the NhaA Na(+)/H(+) (TC 2.A.33) antiporter family.

The protein resides in the cell inner membrane. The enzyme catalyses Na(+)(in) + 2 H(+)(out) = Na(+)(out) + 2 H(+)(in). In terms of biological role, na(+)/H(+) antiporter that extrudes sodium in exchange for external protons. The sequence is that of Na(+)/H(+) antiporter NhaA from Sodalis glossinidius (strain morsitans).